Here is a 526-residue protein sequence, read N- to C-terminus: Catalase (526 aa).

Over residues 1–22 (MADDREKSTDQMKLWKEGRGSQ) the composition is skewed to basic and acidic residues. Positions 1 to 29 (MADDREKSTDQMKLWKEGRGSQRPDVLTT) are disordered. Active-site residues include H75 and N148. Positions 194, 201, 203, 213, 237, 303, 305, and 306 each coordinate NADP(+). Residue Y358 coordinates heme.

This sequence belongs to the catalase family. As to quaternary structure, homotetramer. Heme is required as a cofactor. It depends on NADP(+) as a cofactor.

The protein resides in the peroxisome matrix. It catalyses the reaction 2 H2O2 = O2 + 2 H2O. Catalyzes the degradation of hydrogen peroxide (H(2)O(2)) generated by peroxisomal oxidases to water and oxygen, thereby protecting cells from the toxic effects of hydrogen peroxide. The chain is Catalase (cat) from Danio rerio (Zebrafish).